An 88-amino-acid chain; its full sequence is Large ribosomal subunit protein bL27 (88 aa).

Positions 1 to 21 (MAHKKGQGSTQNNRDSAGRRL) are disordered.

The protein belongs to the bacterial ribosomal protein bL27 family.

The protein is Large ribosomal subunit protein bL27 of Helicobacter pylori (strain J99 / ATCC 700824) (Campylobacter pylori J99).